The following is a 1469-amino-acid chain: Protein BCL9 homolog (1469 aa).

Residues 1 to 16 show a composition bias toward polar residues; it reads MLSTTMPRSPTQQQPQ. 5 disordered regions span residues 1-131, 161-187, 200-222, 422-442, and 454-474; these read MLST…NVSA, SNKA…KEEP, EERE…NAQD, ENSK…QSDP, and GGSS…DSIS. Phosphoserine is present on Ser9. Thr11 carries the post-translational modification Phosphothreonine. Over residues 17 to 34 the composition is skewed to low complexity; that stretch reads PNSDASSTSASGSNPGAA. Composition is skewed to polar residues over residues 40–60 and 90–113; these read SAAS…TLSP and SGNN…NSCL. A compositionally biased stretch (low complexity) spans 116–130; that stretch reads SPQNSSEHSNSSNVS. Ser206 carries the post-translational modification Phosphoserine. Position 208 is a phosphothreonine (Thr208). Ser210 is modified (phosphoserine). Composition is skewed to polar residues over residues 422 to 438 and 455 to 474; these read ENSK…SFVD and GSSN…DSIS. The tract at residues 511 to 555 is ARM-binding; that stretch reads SLQGVKVPDENLTPQQRQHREEQLAKIKKMNQFLFPENENSVGAN. 3 disordered regions span residues 728–830, 844–913, and 961–991; these read GGKP…TSTV, CFQA…RSPV, and QASA…PPPN. Low complexity predominate over residues 731-745; it reads PRQVTGTVVPQQQTP. Polar residues predominate over residues 770-781; the sequence is IQRSASVPIATQ. Over residues 782 to 796 the composition is skewed to low complexity; the sequence is SPNPSSPNNLSLPSP. Composition is skewed to polar residues over residues 806-830 and 844-880; these read PTNS…TSTV and CFQA…TPLS. Ser883, Ser905, and Ser911 each carry phosphoserine. Positions 904-913 are enriched in polar residues; the sequence is PSPQGQRSPV.

It belongs to the BCL9 family. As to quaternary structure, binds to ARM and PYGO.

Its subcellular location is the nucleus. In terms of biological role, involved in signal transduction through the Wnt pathway. In Drosophila melanogaster (Fruit fly), this protein is Protein BCL9 homolog (lgs).